The chain runs to 129 residues: Large ribosomal subunit protein bL19 (129 aa).

Its function is as follows. This protein is located at the 30S-50S ribosomal subunit interface and may play a role in the structure and function of the aminoacyl-tRNA binding site. This is Large ribosomal subunit protein bL19 from Rhodopseudomonas palustris (strain ATCC BAA-98 / CGA009).